A 393-amino-acid polypeptide reads, in one-letter code: F-box/kelch-repeat protein At4g19865 (393 aa).

Residues 1–30 form a disordered region; the sequence is MNFQVEPPEKKKTKNSSPPHSPPSSSSPSL. Residues 27-73 form the F-box domain; the sequence is SPSLSLLPEEIVVHCLARISRLYYPTLSLVSKSFRSILSSTELYATR. 4 Kelch repeats span residues 148–190, 191–237, 239–272, and 273–320; these read EIYV…FHDG, KIYV…RSGV, EGKI…ALRS, and ECMI…GGSS.

The chain is F-box/kelch-repeat protein At4g19865 from Arabidopsis thaliana (Mouse-ear cress).